The chain runs to 159 residues: Eukaryotic translation initiation factor 5A (159 aa).

At lysine 55 the chain carries Hypusine.

Belongs to the eIF-5A family. In terms of processing, lys-55 undergoes hypusination, a unique post-translational modification that consists in the addition of a butylamino group from spermidine to lysine side chain, leading to the formation of the unusual amino acid hypusine. eIF-5As are the only known proteins to undergo this modification, which is essential for their function.

The protein localises to the cytoplasm. Its function is as follows. Translation factor that promotes translation elongation and termination, particularly upon ribosome stalling at specific amino acid sequence contexts. Binds between the exit (E) and peptidyl (P) site of the ribosome and promotes rescue of stalled ribosome: specifically required for efficient translation of polyproline-containing peptides as well as other motifs that stall the ribosome. Acts as a ribosome quality control (RQC) cofactor by joining the RQC complex to facilitate peptidyl transfer during CAT tailing step. The chain is Eukaryotic translation initiation factor 5A (eif5a) from Dictyostelium discoideum (Social amoeba).